Consider the following 1020-residue polypeptide: FERM domain-containing protein 4A (1020 aa).

An FERM domain is found at 5–307; the sequence is RRCQVHLLDD…SQHQFYLDRK (303 aa). Residues 343–405 form a necessary for interaction with CYTH1 region; it reads KGKIISGSSG…RLCLREAELT (63 aa). Low complexity predominate over residues 351-367; it reads SGSLLSSGSQESDSSQS. The tract at residues 351 to 371 is disordered; it reads SGSLLSSGSQESDSSQSAKKD. Residues 367 to 401 are a coiled coil; it reads SAKKDMLAALKSRQEALEETLRQRLEELKRLCLRE. Position 515 is a phosphoserine (Ser-515). The tract at residues 538-665 is disordered; the sequence is DEDSQVTSTI…MPSTPDLRVR (128 aa). Polar residues predominate over residues 542-551; that stretch reads QVTSTISPLQ. Pro residues predominate over residues 556 to 572; it reads GLPPRPPSSHNRPPPPQ. The segment at 565-920 is necessary for tight junction and adherens junction localization; Requires for interaction with PARD3; it reads HNRPPPPQSL…QWYQRSTASH (356 aa). A phosphoserine mark is found at Ser-590 and Ser-601. The segment covering 609-624 has biased composition (basic residues); the sequence is VKKRSSHGHSSSHKRF. Positions 626-658 are enriched in polar residues; the sequence is STGSCTEAGVSSSLQNSPIRSLPHWNSQSSMPS. 2 positions are modified to phosphoserine: Ser-666 and Ser-696. 2 disordered regions span residues 698-741 and 757-810; these read ESQG…HSSS and AEDS…QSQP. Residues 773–796 are compositionally biased toward low complexity; that stretch reads RAAGALGSASSGSMPNLAARSGAA. Residues Ser-785, Ser-854, and Ser-882 each carry the phosphoserine modification. Disordered regions lie at residues 862-949 and 961-1020; these read KESW…STFV and CKAT…STDE. Residues 893-910 show a composition bias toward basic and acidic residues; sequence DGAHDKGSGRAAVSDELR. The segment covering 927–947 has biased composition (low complexity); it reads SHTSSTSSDSGSQYSTSSQST. Composition is skewed to polar residues over residues 967-981, 994-1004, and 1011-1020; these read ALPQ…SSEI, TWQTGEATENS, and ESPTHQSTDE.

As to quaternary structure, interacts (via coiled-coil domain) with CYTH1 (via coiled-coil domain). Interacts with PARD3 (via coiled-coil domain). Found in a complex with PARD3, CYTH1 and FRMD4A. Interacts with CYTH2. Interacts with CYTH3.

Its subcellular location is the cytoplasm. It localises to the cytoskeleton. The protein resides in the cell junction. The protein localises to the adherens junction. It is found in the tight junction. Its function is as follows. Scaffolding protein that regulates epithelial cell polarity by connecting ARF6 activation with the PAR3 complex. Plays a redundant role with FRMD4B in epithelial polarization. May regulate MAPT secretion by activating ARF6-signaling. This Mus musculus (Mouse) protein is FERM domain-containing protein 4A (Frmd4a).